The following is a 634-amino-acid chain: Chaperone protein HtpG (634 aa).

The tract at residues 1 to 342 is a; substrate-binding; that stretch reads MTVASHKETL…SNDLPLNISR (342 aa). Residues 343–559 form a b region; sequence EILQNNRVID…QHDMSGYLER (217 aa). Residues 560–634 form a c region; that stretch reads LLKEAGQQAP…LNSLLLAMAD (75 aa).

It belongs to the heat shock protein 90 family. As to quaternary structure, homodimer.

It is found in the cytoplasm. Molecular chaperone. Has ATPase activity. This is Chaperone protein HtpG from Nitrosococcus oceani (strain ATCC 19707 / BCRC 17464 / JCM 30415 / NCIMB 11848 / C-107).